Here is a 266-residue protein sequence, read N- to C-terminus: Metallo-beta-lactamase domain-containing protein 1 (266 aa).

Residues 48-71 are disordered; it reads LPQTRGPASSHRESPRGSGGAEAA. Positions 114, 116, 118, 119, 169, 192, and 231 each coordinate Zn(2+). Residues 229-266 form a disordered region; sequence PGHGPPFRVLREASQPETEGGGNSQQEPVVGDEEPALH.

The protein belongs to the metallo-beta-lactamase superfamily. Glyoxalase II family. In terms of assembly, homodimer. It depends on Zn(2+) as a cofactor.

It is found in the cytoplasm. Its subcellular location is the cytosol. The protein localises to the nucleus. The enzyme catalyses a ribonucleotidyl-ribonucleotide-RNA + H2O = a 3'-end ribonucleotide-RNA + a 5'-end 5'-phospho-ribonucleoside-RNA + H(+). In terms of biological role, endoribonuclease that catalyzes the hydrolysis of histone-coding pre-mRNA 3'-end. Involved in histone pre-mRNA processing during the S-phase of the cell cycle, which is required for entering/progressing through S-phase. Cleaves histone pre-mRNA at a major and a minor cleavage site after the 5'-ACCCA-3' and the 5'-ACCCACA-3' sequence, respectively, and located downstream of the stem-loop. May require the presence of the HDE element located at the histone pre-RNA 3'-end to avoid non-specific cleavage. This chain is Metallo-beta-lactamase domain-containing protein 1, found in Homo sapiens (Human).